Here is a 433-residue protein sequence, read N- to C-terminus: Enolase (433 aa).

A (2R)-2-phosphoglycerate-binding site is contributed by glutamine 167. Catalysis depends on glutamate 209, which acts as the Proton donor. Mg(2+)-binding residues include aspartate 246, glutamate 287, and aspartate 314. (2R)-2-phosphoglycerate-binding residues include lysine 339, arginine 368, serine 369, and lysine 390. The Proton acceptor role is filled by lysine 339.

This sequence belongs to the enolase family. Mg(2+) serves as cofactor.

The protein localises to the cytoplasm. The protein resides in the secreted. It localises to the cell surface. The catalysed reaction is (2R)-2-phosphoglycerate = phosphoenolpyruvate + H2O. It participates in carbohydrate degradation; glycolysis; pyruvate from D-glyceraldehyde 3-phosphate: step 4/5. Catalyzes the reversible conversion of 2-phosphoglycerate (2-PG) into phosphoenolpyruvate (PEP). It is essential for the degradation of carbohydrates via glycolysis. This is Enolase from Prochlorococcus marinus (strain NATL2A).